The following is a 30-amino-acid chain: Dermonecrotic toxin LlSicTox-alphaIII-1 (30 aa).

His-12 is an active-site residue.

It belongs to the arthropod phospholipase D family. Class I subfamily. It depends on Mg(2+) as a cofactor. In terms of processing, contains 1 disulfide bond. In terms of tissue distribution, expressed by the venom gland.

The protein localises to the secreted. The catalysed reaction is an N-(acyl)-sphingosylphosphocholine = an N-(acyl)-sphingosyl-1,3-cyclic phosphate + choline. The enzyme catalyses an N-(acyl)-sphingosylphosphoethanolamine = an N-(acyl)-sphingosyl-1,3-cyclic phosphate + ethanolamine. It carries out the reaction a 1-acyl-sn-glycero-3-phosphocholine = a 1-acyl-sn-glycero-2,3-cyclic phosphate + choline. It catalyses the reaction a 1-acyl-sn-glycero-3-phosphoethanolamine = a 1-acyl-sn-glycero-2,3-cyclic phosphate + ethanolamine. Its function is as follows. Dermonecrotic toxins cleave the phosphodiester linkage between the phosphate and headgroup of certain phospholipids (sphingolipid and lysolipid substrates), forming an alcohol (often choline) and a cyclic phosphate. This toxin acts on sphingomyelin (SM). It may also act on ceramide phosphoethanolamine (CPE), lysophosphatidylcholine (LPC) and lysophosphatidylethanolamine (LPE), but not on lysophosphatidylserine (LPS), and lysophosphatidylglycerol (LPG). It acts by transphosphatidylation, releasing exclusively cyclic phosphate products as second products. In vivo, intradermal injection induces dermonecrosis. Induces hemolysis, increased vascular permeability, edema, inflammatory response, and platelet aggregation. This is Dermonecrotic toxin LlSicTox-alphaIII-1 from Loxosceles laeta (South American recluse spider).